A 347-amino-acid polypeptide reads, in one-letter code: NADH-ubiquinone oxidoreductase chain 2 (347 aa).

The next 11 helical transmembrane spans lie at 1–21 (MNPL…MMVV), 25–45 (HWLL…PIMM), 59–79 (YLLT…INLM), 96–116 (TLMT…FWVP), 122–142 (IPLT…LSIL), 149–169 (INLH…GWGG), 178–198 (IMAY…LYNP), 200–220 (LTLL…MLFI), 237–257 (MPVI…LPPL), 274–294 (DMLI…YFYM), and 325–345 (LLPT…MLSI).

The protein belongs to the complex I subunit 2 family. In terms of assembly, core subunit of respiratory chain NADH dehydrogenase (Complex I) which is composed of 45 different subunits. Interacts with TMEM242.

Its subcellular location is the mitochondrion inner membrane. It carries out the reaction a ubiquinone + NADH + 5 H(+)(in) = a ubiquinol + NAD(+) + 4 H(+)(out). Core subunit of the mitochondrial membrane respiratory chain NADH dehydrogenase (Complex I) which catalyzes electron transfer from NADH through the respiratory chain, using ubiquinone as an electron acceptor. Essential for the catalytic activity and assembly of complex I. This Balaenoptera physalus (Fin whale) protein is NADH-ubiquinone oxidoreductase chain 2.